The chain runs to 252 residues: Chitooligosaccharide deacetylase (252 aa).

Mg(2+)-binding residues include His61 and His125.

Belongs to the YdjC deacetylase family. ChbG subfamily. Homodimer. It depends on Mg(2+) as a cofactor.

The protein resides in the cytoplasm. The catalysed reaction is N,N'-diacetylchitobiose + H2O = N-acetyl-beta-D-glucosaminyl-(1-&gt;4)-D-glucosamine + acetate. It carries out the reaction diacetylchitobiose-6'-phosphate + H2O = N'-monoacetylchitobiose-6'-phosphate + acetate. The protein operates within glycan degradation; chitin degradation. Its function is as follows. Involved in the degradation of chitin. ChbG is essential for growth on the acetylated chitooligosaccharides chitobiose and chitotriose but is dispensable for growth on cellobiose and chitosan dimer, the deacetylated form of chitobiose. Deacetylation of chitobiose-6-P and chitotriose-6-P is necessary for both the activation of the chb promoter by the regulatory protein ChbR and the hydrolysis of phosphorylated beta-glucosides by the phospho-beta-glucosidase ChbF. Catalyzes the removal of only one acetyl group from chitobiose-6-P to yield monoacetylchitobiose-6-P, the inducer of ChbR and the substrate of ChbF. The chain is Chitooligosaccharide deacetylase from Salmonella heidelberg (strain SL476).